The following is a 1663-amino-acid chain: Cortactin-binding protein 2 (1663 aa).

5 disordered regions span residues 1 to 23 (MATDGASCEPDLSRAPEDAAGAA), 203 to 222 (KKKTNELEEELSTEKRRSTE), 359 to 440 (QASH…LHPG), 454 to 478 (GNANDPDQNGNTTQSPPSRDVSPTS), and 498 to 617 (RFTS…KPSI). A coiled-coil region spans residues 119 to 276 (KKMQERMSAQ…EQLKRGSDSK (158 aa)). Over residues 386 to 396 (PSTGSTPDPTS) the composition is skewed to low complexity. Asymmetric dimethylarginine is present on Arg-498. Over residues 583–593 (TVASPPSSLPQ) the composition is skewed to polar residues. ANK repeat units follow at residues 709–739 (GRPTLLQQAAAQGNVTLLSMLLNEEGLDINY), 743–772 (DGHSALYSAAKNGHTDCVRLLLSAEAQVNA), 776–805 (NGFTPLCAAAAQGHFECVELLIAYDANINH), 809–838 (GGQTPLYLACKNGNKECVKLLLEAGTNRSV), 842–871 (DGWTPVHAAVDTGNVDSLKLLMYHRIPARG), and 912–942 (EGWTAAHIAASKGFKNCLEILCRHRGLEPER). The tract at residues 1446–1485 (NKKKGESGAWRKVNTSPRRKSGRFSLPTWNKPDLSTEGMK) is disordered. Ser-1524 bears the Phosphoserine mark. Positions 1580-1663 (SQKEVSPLSS…KNEHLEKPNK (84 aa)) are disordered. Residues 1582–1599 (KEVSPLSSHQTTECSNSK) are compositionally biased toward polar residues. The segment covering 1624–1638 (SQNTKRSSSSSNTRQ) has biased composition (low complexity). Residues 1645-1663 (SKEENWNLHKNEHLEKPNK) show a composition bias toward basic and acidic residues.

Interacts with CTTN/cortactin SH3 domain. Interacts with STRN, STRN4/zinedin and MOB4/phocein; this interactions mediate the association with the STRIPAK core complex and may regulate dendritic spine distribution of the STRIPAK complex in hippocampal neurons. Activation of glutamate receptors weakens the interaction with STRN and STRN4.

The protein resides in the cytoplasm. Its subcellular location is the cell cortex. The protein localises to the cell projection. It is found in the dendritic spine. In terms of biological role, regulates the dendritic spine distribution of CTTN/cortactin in hippocampal neurons, and thus controls dendritic spinogenesis and dendritic spine maintenance. Associates with the striatin-interacting phosphatase and kinase (STRIPAK) core complex to regulate dendritic spine distribution of the STRIPAK complex in hippocampal neurons. The chain is Cortactin-binding protein 2 (CTTNBP2) from Pongo abelii (Sumatran orangutan).